The chain runs to 114 residues: rRNA-processing protein cgrA (114 aa).

The disordered stretch occupies residues 1–96 (MSASESAPSA…YDKMAEKMHR (96 aa)). Positions 40–101 (AKRLEARKHQ…EKMHRKRVER (62 aa)) form a coiled coil. The segment covering 41–93 (KRLEARKHQEAVKEHERELKEEKEAERQAHIQRIKDRRAAKEEKERYDKMAEK) has biased composition (basic and acidic residues).

This sequence belongs to the CGR1 family.

The protein localises to the nucleus. Its subcellular location is the nucleolus. In terms of biological role, involved in nucleolar integrity and required for processing of the pre-rRNA for the 60S ribosome subunit. The protein is rRNA-processing protein cgrA (cgrA) of Aspergillus terreus (strain NIH 2624 / FGSC A1156).